We begin with the raw amino-acid sequence, 374 residues long: MNSPISLDMGAITYNMDDLYKELAIYSNSTEIPLQDSIFCSTEEGPLLTSFKTIFMPVAYSLIFLLGMMGNILVLVILERHRHTRSSTETFLFHLAVADLLLVFILPFAVAEGSVGWVLGTFLCKTVIALHKINFYCSSLLLACIAVDRYLAIVHAVHAYRRRRLLSIHITCSTIWLAGFLFALPELLFAKVVQPHNNESLPQCIFSQENEAETRAWFASRFLYHTGGFLLPMLVMAWCYVGVVHRLLQAQRRPQRQKAVRVAILVTSIFLLCWSPYHIVIFLDTLERLKAVNSSCELSGYLSVAITLCEFLGLAHCCLNPMLYTFAGVKFRSDLSRLLTKLGCAGPASLCQLFPGWRKSSLSESENATSLTTF.

The Extracellular segment spans residues 1–57 (MNSPISLDMGAITYNMDDLYKELAIYSNSTEIPLQDSIFCSTEEGPLLTSFKTIFMP). The N-linked (GlcNAc...) asparagine glycan is linked to Asn-28. The helical transmembrane segment at 58-78 (VAYSLIFLLGMMGNILVLVIL) threads the bilayer. At 79 to 90 (ERHRHTRSSTET) the chain is on the cytoplasmic side. The chain crosses the membrane as a helical span at residues 91–111 (FLFHLAVADLLLVFILPFAVA). Topologically, residues 112 to 126 (EGSVGWVLGTFLCKT) are extracellular. The cysteines at positions 124 and 204 are disulfide-linked. A helical transmembrane segment spans residues 127 to 147 (VIALHKINFYCSSLLLACIAV). Residues 148 to 169 (DRYLAIVHAVHAYRRRRLLSIH) lie on the Cytoplasmic side of the membrane. The chain crosses the membrane as a helical span at residues 170-190 (ITCSTIWLAGFLFALPELLFA). At 191 to 221 (KVVQPHNNESLPQCIFSQENEAETRAWFASR) the chain is on the extracellular side. Asn-198 carries N-linked (GlcNAc...) asparagine glycosylation. A helical membrane pass occupies residues 222 to 242 (FLYHTGGFLLPMLVMAWCYVG). Over 243–261 (VVHRLLQAQRRPQRQKAVR) the chain is Cytoplasmic. A helical transmembrane segment spans residues 262-282 (VAILVTSIFLLCWSPYHIVIF). The Extracellular segment spans residues 283–306 (LDTLERLKAVNSSCELSGYLSVAI). The chain crosses the membrane as a helical span at residues 307–327 (TLCEFLGLAHCCLNPMLYTFA). The Cytoplasmic segment spans residues 328-374 (GVKFRSDLSRLLTKLGCAGPASLCQLFPGWRKSSLSESENATSLTTF).

Belongs to the G-protein coupled receptor 1 family. In terms of tissue distribution, expressed in neuronal and lymphatic tissue.

The protein resides in the cell membrane. Its function is as follows. Cytokine receptor that binds to B-lymphocyte chemoattractant (BLC). Involved in B-cell migration into B-cell follicles of spleen and Peyer patches but not into those of mesenteric or peripheral lymph nodes. In Rattus norvegicus (Rat), this protein is C-X-C chemokine receptor type 5 (Cxcr5).